We begin with the raw amino-acid sequence, 321 residues long: Glycolipid transfer protein domain-containing protein 2 (321 aa).

This sequence belongs to the GLTP family.

In Mus musculus (Mouse), this protein is Glycolipid transfer protein domain-containing protein 2 (Gltpd2).